The following is a 413-amino-acid chain: Zona pellucida-like domain-containing protein 1 (413 aa).

The signal sequence occupies residues 1–19 (MEQICLIILLISKALSVGA). Q20 is modified (pyrrolidone carboxylic acid). The Extracellular segment spans residues 20–370 (QFNGYNCDAN…PVFRMNTVTS (351 aa)). Residues 43 to 320 (YCGVQTITLK…PICGSRKKRD (278 aa)) form the ZP domain. 2 disulfide bridges follow: C44–C155 and C79–C104. Residues N85, N121, N129, N164, N181, and N194 are each glycosylated (N-linked (GlcNAc...) asparagine). Disulfide bonds link C235–C296 and C255–C313. N351 is a glycosylation site (N-linked (GlcNAc...) asparagine). Residues 371–391 (ALISGIIILGVMSLCFFILSL) traverse the membrane as a helical segment. The Cytoplasmic segment spans residues 392–413 (TLLKGKRAPPTILSGARNPAFN).

Post-translationally, proteolytically cleaved before the transmembrane segment to yield the secreted form found in the extracellular matrix of the cupula. In terms of processing, N-glycosylated. As to expression, detected in the acellular cupulae of the vestibular organ, and also in support cells adjacent to the cupula (at protein level).

Its subcellular location is the cytoplasmic vesicle membrane. The protein resides in the secreted. It localises to the extracellular space. The protein localises to the extracellular matrix. In terms of biological role, glycoprotein which is a component of the gelatinous extracellular matrix in the cupulae of the vestibular organ. The chain is Zona pellucida-like domain-containing protein 1 from Salmo salar (Atlantic salmon).